Reading from the N-terminus, the 616-residue chain is GPI mannosyltransferase 3 (616 aa).

Over 1–16 (MAHEVHRIKPKLGRTQ) the chain is Cytoplasmic. The helical transmembrane segment at 17–37 (IFWVFLAFRVLNAVLTRTFFQ) threads the bilayer. At 38-86 (ADEFWQALEPAHWKAFKYGELTWEWKFGVRSYLFPMIFELTYRLVSLSS) the chain is on the lumenal side. A helical transmembrane segment spans residues 87-107 (ILLHYALLLLSTIGSDLLILL). At 108–136 (LPKYELSWQVAEDLKRLPFDVTRSFEYYG) the chain is on the cytoplasmic side. A helical transmembrane segment spans residues 137–157 (VIYAPKIVMAVLASIGEYYIV). Residues 158–188 (RFVQKLYLLTLDKRNEKEEEERRSGLSEITK) lie on the Lumenal side of the membrane. The helical transmembrane segment at 189–209 (FALLLSLTNFFNCFFITRTFI) threads the bilayer. The Cytoplasmic portion of the chain corresponds to 210-240 (NSFEMILTSIALYYWDWTGGQMIKESSFTKS). A helical transmembrane segment spans residues 241-261 (LIFAFLACLQRPSSGLIWVIP). The Lumenal segment spans residues 262-278 (SISLILNLVGKKQYHLL). The helical transmembrane segment at 279–299 (FITFSKVLRSFFLVFTANAII) threads the bilayer. The Cytoplasmic segment spans residues 300-338 (DMYFYEKVTFPFFRFLKFNFTTPLSKFYGVAPWHFHFFQ). A helical transmembrane segment spans residues 339-359 (SLPIVLGASIPAFAFGLFFPL). The Lumenal portion of the chain corresponds to 360 to 392 (SKRSFPKKYLNPFFQVKLTILLNLLVYSTLPHK). Residues 393 to 413 (EFRFIFPLQPLFILISSFGLL) form a helical membrane-spanning segment. Topologically, residues 414-423 (RLDRDYWKRL) are cytoplasmic. The chain crosses the membrane as a helical span at residues 424–444 (SGLKSLLWLVPFVSVFIALLL). The Lumenal segment spans residues 445–616 (DTFHESGSIE…DYSDIPAADI (172 aa)).

The protein belongs to the glycosyltransferase 22 family. PIGB subfamily.

The protein localises to the endoplasmic reticulum membrane. It participates in glycolipid biosynthesis; glycosylphosphatidylinositol-anchor biosynthesis. In terms of biological role, mannosyltransferase involved in glycosylphosphatidylinositol-anchor biosynthesis. Transfers the third mannose to Man2-GlcN-acyl-PI during GPI precursor assembly. In Saccharomyces cerevisiae (strain ATCC 204508 / S288c) (Baker's yeast), this protein is GPI mannosyltransferase 3 (GPI10).